Consider the following 291-residue polypeptide: UDP-N-acetylenolpyruvoylglucosamine reductase (291 aa).

One can recognise an FAD-binding PCMH-type domain in the interval 22–187 (RIGGPARYFK…ASATFQLTKD (166 aa)). Arginine 166 is a catalytic residue. Catalysis depends on cysteine 214, which acts as the Proton donor. Glutamate 283 is a catalytic residue.

It belongs to the MurB family. Requires FAD as cofactor.

It localises to the cytoplasm. It catalyses the reaction UDP-N-acetyl-alpha-D-muramate + NADP(+) = UDP-N-acetyl-3-O-(1-carboxyvinyl)-alpha-D-glucosamine + NADPH + H(+). Its pathway is cell wall biogenesis; peptidoglycan biosynthesis. Functionally, cell wall formation. The sequence is that of UDP-N-acetylenolpyruvoylglucosamine reductase from Chlamydia trachomatis serovar L2 (strain ATCC VR-902B / DSM 19102 / 434/Bu).